We begin with the raw amino-acid sequence, 84 residues long: Putative membrane protein insertion efficiency factor (84 aa).

Residues 64–84 (GGSGYDPPPPRHQPRKWKCEE) are disordered. Over residues 75–84 (HQPRKWKCEE) the composition is skewed to basic residues.

The protein belongs to the UPF0161 family.

Its subcellular location is the cell inner membrane. Its function is as follows. Could be involved in insertion of integral membrane proteins into the membrane. In Caulobacter vibrioides (strain ATCC 19089 / CIP 103742 / CB 15) (Caulobacter crescentus), this protein is Putative membrane protein insertion efficiency factor.